The sequence spans 174 residues: uncharacterized protein (174 aa).

It belongs to the gamma-class carbonic anhydrase family.

This is an uncharacterized protein from Pseudomonas aeruginosa (strain ATCC 15692 / DSM 22644 / CIP 104116 / JCM 14847 / LMG 12228 / 1C / PRS 101 / PAO1).